The following is a 130-amino-acid chain: Large ribosomal subunit protein bL19 (130 aa).

Belongs to the bacterial ribosomal protein bL19 family.

In terms of biological role, this protein is located at the 30S-50S ribosomal subunit interface and may play a role in the structure and function of the aminoacyl-tRNA binding site. The chain is Large ribosomal subunit protein bL19 from Burkholderia lata (strain ATCC 17760 / DSM 23089 / LMG 22485 / NCIMB 9086 / R18194 / 383).